We begin with the raw amino-acid sequence, 112 residues long: Protein new-glue 2 (112 aa).

The first 24 residues, 1 to 24 (MKITVVLVLLATFLGCVMIHESEA), serve as a signal peptide directing secretion. Positions 24-69 (ASTTTTSTSASATTTTSASATTTTSASATTTTSASATTTTASPSSS) are enriched in low complexity. The segment at 24–112 (ASTTTTSTSA…RSSRNRRSEE (89 aa)) is disordered. Repeat copies occupy residues 31 to 38 (TSASATTT), 39 to 46 (TSASATTT), 47 to 54 (TSASATTT), and 55 to 62 (TSASATTT). A 4 X 8 AA tandem repeats of T-S-A-S-A-T-T-T region spans residues 31–62 (TSASATTTTSASATTTTSASATTTTSASATTT). Positions 70-112 (SKKKTVTHYKRKVKRPKKVRKITRRRGLRSRNGRSSRNRRSEE) are enriched in basic residues.

The protein to NG-1, also to SGS-3. Salivary gland specific.

It localises to the secreted. This is Protein new-glue 2 (ng2) from Drosophila melanogaster (Fruit fly).